The chain runs to 301 residues: Phosphatidylglycerol--prolipoprotein diacylglyceryl transferase (301 aa).

4 consecutive transmembrane segments (helical) span residues 10-30 (IAFS…LAGF), 57-77 (LLFY…MLFY), 92-112 (VWEG…AVAW), and 119-139 (MHMF…LGFG). Arginine 140 provides a ligand contact to a 1,2-diacyl-sn-glycero-3-phospho-(1'-sn-glycerol). A run of 3 helical transmembrane segments spans residues 202-222 (PSQL…LWLF), 230-250 (YAVS…VEFV), and 264-284 (LTRG…LFWL).

Belongs to the Lgt family.

It is found in the cell inner membrane. The enzyme catalyses L-cysteinyl-[prolipoprotein] + a 1,2-diacyl-sn-glycero-3-phospho-(1'-sn-glycerol) = an S-1,2-diacyl-sn-glyceryl-L-cysteinyl-[prolipoprotein] + sn-glycerol 1-phosphate + H(+). The protein operates within protein modification; lipoprotein biosynthesis (diacylglyceryl transfer). Catalyzes the transfer of the diacylglyceryl group from phosphatidylglycerol to the sulfhydryl group of the N-terminal cysteine of a prolipoprotein, the first step in the formation of mature lipoproteins. This is Phosphatidylglycerol--prolipoprotein diacylglyceryl transferase from Xylella fastidiosa (strain M23).